The sequence spans 310 residues: MIIVTGGAGFIGSNIVKALNDKGITDILVVDNLKDGTKFVNLVDLNIADYMDKEDFLIQIMSGEELGDIEAIFHEGACSSTTEWDGKYMMDNNYQYSKELLHYCLEREIPFLYASSAATYGGRTSDFIESREYEKPLNVYGYSKFLFDEYVRQILPEANSQIVGFRYFNVYGPREGHKGSMASVAFHLNTQLNNGESPKLFEGSENFKRDFVYVGDVAAVNLWFLESGKSGIFNLGTGRAESFQAVADATLAYHKKSSIEYIPFPDKLKGRYQAFTQADLTNLRNAGYDKPFKTVAEGVTEYMAWLNRDA.

Residues 10-11, 31-32, K38, K53, 75-79, and N92 contribute to the NADP(+) site; these read FI, DN, and EGACS. The active-site Proton acceptor is Y140. K144 contacts NADP(+). N169 contributes to the substrate binding site. NADP(+)-binding residues include V170 and K178. The active-site Proton acceptor is K178. Substrate-binding positions include S180, H187, 201-204, R209, and Y272; that span reads FEGS.

Belongs to the NAD(P)-dependent epimerase/dehydratase family. HldD subfamily. In terms of assembly, homopentamer. Requires NADP(+) as cofactor.

It catalyses the reaction ADP-D-glycero-beta-D-manno-heptose = ADP-L-glycero-beta-D-manno-heptose. It functions in the pathway nucleotide-sugar biosynthesis; ADP-L-glycero-beta-D-manno-heptose biosynthesis; ADP-L-glycero-beta-D-manno-heptose from D-glycero-beta-D-manno-heptose 7-phosphate: step 4/4. Its function is as follows. Catalyzes the interconversion between ADP-D-glycero-beta-D-manno-heptose and ADP-L-glycero-beta-D-manno-heptose via an epimerization at carbon 6 of the heptose. The polypeptide is ADP-L-glycero-D-manno-heptose-6-epimerase (Salmonella dublin (strain CT_02021853)).